An 86-amino-acid polypeptide reads, in one-letter code: MKASVLITLAVLGVMFVWASAAELEERGSDQRDSPAWLKSMERIFQSEERECRKMFGGCSVDSDCCAHLGCKPTLKYCAWDGTFGK.

An N-terminal signal peptide occupies residues M1–A21. The propeptide occupies A22–R50. 3 disulfide bridges follow: C52–C66, C59–C71, and C65–C78. At F84 the chain carries Phenylalanine amide.

This sequence belongs to the neurotoxin 10 (Hwtx-1) family. 28 (Jztx-11) subfamily. As to expression, expressed by the venom gland.

The protein resides in the secreted. In terms of biological role, this toxin acts as a voltage-dependent gating-modifier. It inhibits the sodium conductance (IC(50)=124 nM) and slows the fast inactivation (EC(50)=1180 nM) of Nav1.5/SCN5A. It significantly shifts the activation to more depolarized voltages and decreases the deactivation of Nav1.5 currents upon extreme depolarization, but only slightly affects voltage-dependence of steady-state inactivation. In addition, this toxin causes an approximately five-fold decrease in the rate of recovery from inactivation and an approximately 1.9-fold reduction in the closed-state inactivation rate. This toxin integrates the functions of site 3 toxins (alpha-scorpion toxins) with site 4 toxins (beta-scorpion and spider toxins) by targeting multiple sites on Nav1.5. Also shows inhibition of voltage-gated potassium channels (5 uM completely inhibits Kv2.1/KCNB1, whereas 5 uM moderately inhibits Kv4.2/KCND2 Kv4.1/KCND1 channels). This Chilobrachys guangxiensis (Chinese earth tiger tarantula) protein is Kappa-theraphotoxin-Cg1a 4.